Reading from the N-terminus, the 174-residue chain is ATP-dependent protease subunit HslV (174 aa).

The active site involves Thr2. Residues Ala156, Cys159, and Thr162 each coordinate Na(+).

The protein belongs to the peptidase T1B family. HslV subfamily. As to quaternary structure, a double ring-shaped homohexamer of HslV is capped on each side by a ring-shaped HslU homohexamer. The assembly of the HslU/HslV complex is dependent on binding of ATP.

The protein resides in the cytoplasm. It carries out the reaction ATP-dependent cleavage of peptide bonds with broad specificity.. With respect to regulation, allosterically activated by HslU binding. Its function is as follows. Protease subunit of a proteasome-like degradation complex believed to be a general protein degrading machinery. The chain is ATP-dependent protease subunit HslV from Agrobacterium fabrum (strain C58 / ATCC 33970) (Agrobacterium tumefaciens (strain C58)).